Consider the following 214-residue polypeptide: Nucleoside triphosphate pyrophosphatase (214 aa).

Aspartate 79 acts as the Proton acceptor in catalysis.

Belongs to the Maf family. A divalent metal cation is required as a cofactor.

The protein localises to the cytoplasm. The catalysed reaction is a ribonucleoside 5'-triphosphate + H2O = a ribonucleoside 5'-phosphate + diphosphate + H(+). It carries out the reaction a 2'-deoxyribonucleoside 5'-triphosphate + H2O = a 2'-deoxyribonucleoside 5'-phosphate + diphosphate + H(+). In terms of biological role, nucleoside triphosphate pyrophosphatase. May have a dual role in cell division arrest and in preventing the incorporation of modified nucleotides into cellular nucleic acids. The chain is Nucleoside triphosphate pyrophosphatase from Rhodococcus jostii (strain RHA1).